A 329-amino-acid polypeptide reads, in one-letter code: MAKAPMRVAVTGAAGQIGYALLFRIAAGEMLGKDQPVILQLLEIPDEKAQKALKGVMMEIEDCAFPLLAGMEAHADPMTAFKDVDVALLVGARPRGPGMERKDLLSANAQIFTAQGKALNAVASRNVKVLVVGNPANTNAYIAMKSAPDLPRENFTAMLRLDHNRALSQIAAKTGKPVSSIEKLFVWGNHSPTMYADYRYATIDGQSVKDMINDPVWNNDVFLPTVGKRGAAIIEARGLSSAASAANAAIDHVRDWVLGSNGKIVTMGIPSNGDYEIPQDVMFGFPVTTANGKYEVVKGFEVDAYSREKINITLKELEEERAGVQHLLG.

12 to 18 (GAAGQIG) contributes to the NAD(+) binding site. R95 and R101 together coordinate substrate. NAD(+)-binding positions include N108, Q115, and 132–134 (VGN). Substrate contacts are provided by N134 and R165. The active-site Proton acceptor is H190.

The protein belongs to the LDH/MDH superfamily. MDH type 2 family.

It carries out the reaction (S)-malate + NAD(+) = oxaloacetate + NADH + H(+). Functionally, catalyzes the reversible oxidation of malate to oxaloacetate. This chain is Malate dehydrogenase, found in Ralstonia nicotianae (strain ATCC BAA-1114 / GMI1000) (Ralstonia solanacearum).